A 261-amino-acid polypeptide reads, in one-letter code: UPF0328 protein ECU06_0100 (261 aa).

This sequence belongs to the UPF0328 family.

The chain is UPF0328 protein ECU06_0100 from Encephalitozoon cuniculi (strain GB-M1) (Microsporidian parasite).